The primary structure comprises 242 residues: MSQAPKIAMVLAAGLGTRMRPLTNDRPKALVEVAGKALIDHMLDRLVAASVETAVVNVHYFADLVEAHLRAREAKGLAPRIVISDERVQALETGGGIKHALALLGEGPVFVANIDSIWIEHAGAAVDAVAAAWDPERMDVCLMLASTTESLGFHDTGDVFLSADGLVRFKDAGEIAPLVYVGVHICKPEITADGPDGPFSLLPLWKRLAADGRVCGVAPEGLWMHVGDPQAKLAAEARLAEA.

UTP is bound by residues 16 to 18 and Lys-28; that span reads GTR. Asn-113 serves as a coordination point for substrate. Residue Asp-115 coordinates Mg(2+). Asp-158 is a substrate binding site.

It belongs to the nucleotidyltransferase MurU family. Monomer. The cofactor is Mg(2+).

The enzyme catalyses N-acetyl-alpha-D-muramate 1-phosphate + UDP + H(+) = UDP-N-acetyl-alpha-D-muramate + phosphate. It participates in cell wall biogenesis; peptidoglycan recycling. Its function is as follows. Catalyzes the formation of UDP-N-acetylmuramate (UDP-MurNAc), a crucial precursor of the bacterial peptidoglycan cell wall, from UTP and MurNAc-alpha-1P. Is likely involved in peptidoglycan recycling as part of a cell wall recycling pathway that bypasses de novo biosynthesis of the peptidoglycan precursor UDP-MurNAc. Is able to complement the fosfomycin sensitivity phenotype of a P.putida mutant lacking murU. The polypeptide is N-acetylmuramate alpha-1-phosphate uridylyltransferase (Caulobacter vibrioides (strain ATCC 19089 / CIP 103742 / CB 15) (Caulobacter crescentus)).